Reading from the N-terminus, the 326-residue chain is MRPLMLQGHERSITQIKYNREGDLLFSSSKDQKPNVWYSLNGERLGTYDGHQGAVWCLDVDWESRKLITGAGDMTTKLWDVEYGTVIASIATKSSVRTSNFSFSGNQAAYSTDKAMGQNCELFIIDVRNADSTLSEQEPTLRIPMVESKITSMQWGPLDETIITGHDNGNIAIWDVRKGQKVVDSGVDHAAGINDMQLSKDGTMFVTASKDNTAKLFDAESLMCLKTYKTERPVNSAAISPIFDHVVLGGGQDAMEVTTTSTKAGKFDSRFFHLIYEEEFARLKGHFGPINSLAFHPDGKSYASGGEDGFVRVQSFDSTYFENIFE.

WD repeat units follow at residues 8–47, 50–89, 145–184, 188–227, and 285–326; these read GHERSITQIKYNREGDLLFSSSKDQKPNVWYSLNGERLGT, GHQGAVWCLDVDWESRKLITGAGDMTTKLWDVEYGTVIAS, MVESKITSMQWGPLDETIITGHDNGNIAIWDVRKGQKVVD, DHAAGINDMQLSKDGTMFVTASKDNTAKLFDAESLMCLKT, and GHFG…NIFE.

It belongs to the eIF-3 subunit I family. Component of the eukaryotic translation initiation factor 3 (eIF-3) complex. The eIF-3 complex interacts with pix.

The protein localises to the cytoplasm. Functionally, component of the eukaryotic translation initiation factor 3 (eIF-3) complex, which is involved in protein synthesis of a specialized repertoire of mRNAs and, together with other initiation factors, stimulates binding of mRNA and methionyl-tRNAi to the 40S ribosome. The eIF-3 complex specifically targets and initiates translation of a subset of mRNAs involved in cell proliferation. The sequence is that of Eukaryotic translation initiation factor 3 subunit I from Drosophila grimshawi (Hawaiian fruit fly).